The following is a 158-amino-acid chain: Inner membrane assembly complex subunit 17 (158 aa).

A mitochondrion-targeting transit peptide spans 1–15; it reads MFRPLVKRVVTRRFL. The Mitochondrial matrix portion of the chain corresponds to 16–85; the sequence is AAANNSNAHI…KTQETSLKKF (70 aa). A helical membrane pass occupies residues 86-108; the sequence is VRPAWIFLLMGSIVYLSCHYVWW. Residues 109 to 158 lie on the Mitochondrial intermembrane side of the membrane; sequence KLDYEEKELEYTHKVHQLESELAALNEAHNSSVSSDKNSKRSSRKWYKFW. The stretch at 110 to 140 forms a coiled coil; it reads LDYEEKELEYTHKVHQLESELAALNEAHNSS.

It belongs to the INA17 family. As to quaternary structure, component of the inner membrane assembly (INA) complex, composed of INA17 and INA22. Interacts with a subset of F(1)F(0)-ATP synthase subunits of the F(1)-domain and the peripheral stalk.

The protein localises to the mitochondrion inner membrane. Component of the INA complex (INAC) that promotes the biogenesis of mitochondrial F(1)F(0)-ATP synthase. INAC facilitates the assembly of the peripheral stalk and promotes the assembly of the catalytic F(1)-domain with the membrane-embedded F(0)-domain. The sequence is that of Inner membrane assembly complex subunit 17 from Kluyveromyces lactis (strain ATCC 8585 / CBS 2359 / DSM 70799 / NBRC 1267 / NRRL Y-1140 / WM37) (Yeast).